The primary structure comprises 311 residues: Urease accessory protein UreD (311 aa).

This sequence belongs to the UreD family. As to quaternary structure, ureD, UreF and UreG form a complex that acts as a GTP-hydrolysis-dependent molecular chaperone, activating the urease apoprotein by helping to assemble the nickel containing metallocenter of UreC. The UreE protein probably delivers the nickel.

It is found in the cytoplasm. Required for maturation of urease via the functional incorporation of the urease nickel metallocenter. This chain is Urease accessory protein UreD, found in Synechococcus sp. (strain CC9902).